Here is a 363-residue protein sequence, read N- to C-terminus: 3-dehydroquinate synthase (363 aa).

Residues 134–135 (TT), Lys147, and Lys156 contribute to the NAD(+) site. Zn(2+)-binding residues include Glu189, His254, and His271.

It belongs to the sugar phosphate cyclases superfamily. Dehydroquinate synthase family. Requires Co(2+) as cofactor. It depends on Zn(2+) as a cofactor. NAD(+) serves as cofactor.

It is found in the cytoplasm. It carries out the reaction 7-phospho-2-dehydro-3-deoxy-D-arabino-heptonate = 3-dehydroquinate + phosphate. It functions in the pathway metabolic intermediate biosynthesis; chorismate biosynthesis; chorismate from D-erythrose 4-phosphate and phosphoenolpyruvate: step 2/7. Functionally, catalyzes the conversion of 3-deoxy-D-arabino-heptulosonate 7-phosphate (DAHP) to dehydroquinate (DHQ). The protein is 3-dehydroquinate synthase of Prochlorococcus marinus (strain AS9601).